The primary structure comprises 235 residues: uncharacterized protein (235 aa).

Disordered stretches follow at residues 20–64 (IHPN…LPIK) and 140–164 (SQFF…NFDQ). 2 stretches are compositionally biased toward low complexity: residues 30 to 60 (NNNN…SNNN) and 140 to 161 (SQFF…NNKN). A coiled-coil region spans residues 174 to 213 (KYMEFLSDIEQLNSDLKESKDNLESISIEMVLLETRLKGL).

This is an uncharacterized protein from Dictyostelium discoideum (Social amoeba).